Here is a 388-residue protein sequence, read N- to C-terminus: Probable proton-coupled zinc antiporter SLC30A3 (388 aa).

Positions 1–42 are disordered; that stretch reads MEPSPASGGSETTRLVSPRDRSSAGGGLRLKSLFTEPSEPLP. Residues 1-75 are Cytoplasmic-facing; it reads MEPSPASGGS…SPERAQARRQ (75 aa). Residues serine 63 and serine 66 each carry the phosphoserine modification. A helical transmembrane segment spans residues 76–96; sequence LYAACVVCFIFMAGEVVGGYL. Residues 97–105 lie on the Lumenal side of the membrane; that stretch reads AHSLAIMTD. Residues 106–126 traverse the membrane as a helical segment; it reads AAHLLADIGSMMASLFSLWLS. Residues histidine 108 and aspartate 112 each coordinate Zn(2+). Topologically, residues 127–145 are cytoplasmic; that stretch reads TRPATRTMTFGWHRSETLG. A helical membrane pass occupies residues 146 to 166; sequence ALASVVSLWIVTGILLYLAFL. The Lumenal portion of the chain corresponds to 167–177; it reads RLLHSDYHIEA. Residues 178–198 form a helical membrane-spanning segment; the sequence is GAMLLTASIAVCANMIMAFVL. At 199–235 the chain is on the cytoplasmic side; that stretch reads HQTGAPHSHGPRGAEYAPLEEGHGHPLSLGNTSVRAA. Residues 236–256 form a helical membrane-spanning segment; it reads FVHVLGDLLQSLGVLAASILI. Zn(2+) contacts are provided by histidine 238 and aspartate 242. Topologically, residues 257 to 263 are lumenal; that stretch reads YFKPQYK. The helical transmembrane segment at 264–284 threads the bilayer; sequence VADPISTFLFSICALGSTAPT. Residues 285–388 are Cytoplasmic-facing; it reads LRDVLLVLME…CLRCREPPKA (104 aa).

It belongs to the cation diffusion facilitator (CDF) transporter (TC 2.A.4) family. SLC30A subfamily. As to quaternary structure, homodimer. Homodimerization could regulate efficiency of zinc transport. Interacts with TMEM163.

It localises to the cytoplasmic vesicle. The protein resides in the secretory vesicle. Its subcellular location is the synaptic vesicle membrane. The protein localises to the synapse. It is found in the synaptosome. It localises to the late endosome membrane. The protein resides in the lysosome membrane. It catalyses the reaction Zn(2+)(in) + 2 H(+)(out) = Zn(2+)(out) + 2 H(+)(in). Probable proton-coupled zinc ion antiporter mediating the import of zinc from cytoplasm into synaptic vesicles and participating to cellular zinc ion homeostasis in the brain. This Rattus norvegicus (Rat) protein is Probable proton-coupled zinc antiporter SLC30A3.